A 1144-amino-acid polypeptide reads, in one-letter code: Adenylate cyclase type 3 (1144 aa).

The Cytoplasmic portion of the chain corresponds to 1-79 (MTEDQGFSDP…FKRQRHETLL (79 aa)). 5 helical membrane-spanning segments follow: residues 80–100 (VLVV…AVVF), 105–125 (LAPL…FVLC), 139–159 (VPYL…GLNF), 173–193 (AFFV…IVII), and 226–246 (ILAN…SYYM). Mg(2+)-binding residues include Asp-324, Ile-325, and Asp-368. ATP is bound by residues 324–329 (DIVGFT) and 366–368 (LGD). The chain crosses the membrane as a helical span at residues 381–401 (EDHAVCSILMGLAMVEAISYV). Residues 402 to 630 (REKTKTGVDM…RYSVEKEKQS (229 aa)) are Cytoplasmic-facing. ATP is bound at residue Arg-412. Lys-465 is covalently cross-linked (Glycyl lysine isopeptide (Lys-Gly) (interchain with G-Cter in SUMO3)). The tract at residues 504–563 (QNGLNGSALPNGAPASKPSSPALIETKEPNGSAHASGSTSEEAEEQEAQADNPSFPNPRR) is disordered. Ser-523 carries the phosphoserine modification. Residues 534 to 543 (GSAHASGSTS) show a composition bias toward low complexity. Ser-578 carries the phosphoserine modification. Transmembrane regions (helical) follow at residues 631-651 (GAAF…EILI), 662-682 (FVVG…AIFP), and 706-726 (WAML…LSCL). N-linked (GlcNAc...) asparagine glycosylation occurs at Asn-734. The next 3 membrane-spanning stretches (helical) occupy residues 755–775 (VAVL…MVKL), 777–797 (LMLL…CPVF), and 833–853 (LPLV…MLSF). The Cytoplasmic portion of the chain corresponds to 854–1144 (YYFSRHVEKL…TLPHQVVDNP (291 aa)). Residues Lys-975, 1062-1064 (DIW), and 1069-1073 (NVASR) contribute to the ATP site. Ser-1076 carries the phosphoserine; by CaMK2 modification. Lys-1109 contributes to the ATP binding site.

The protein belongs to the adenylyl cyclase class-4/guanylyl cyclase family. It depends on Mg(2+) as a cofactor. Requires Mn(2+) as cofactor. In terms of processing, N-glycosylated. Sumoylated. Sumoylation is required for targeting ot olfactory cilia. Post-translationally, rapidly phosphorylated after stimulation by odorants or forskolin. Phosphorylation by CaMK2 at Ser-1076 down-regulates enzyme activity. As to expression, detected on cilia on the olfactory epithelium (at protein level). Detected on cilia on the olfactory epithelium.

The protein resides in the cell membrane. It is found in the golgi apparatus. Its subcellular location is the cell projection. It localises to the cilium. The protein localises to the cytoplasm. It catalyses the reaction ATP = 3',5'-cyclic AMP + diphosphate. With respect to regulation, specifically activated by the G alpha protein GNAL/G(olf) in signaling cascades triggered by odorant receptors. Activated by forskolin. After forskolin treatment, activity is further increased by calcium/calmodulin. In the absence of forskolin, calcium/calmodulin has little effect on enzyme activity. Functionally, catalyzes the formation of the signaling molecule cAMP in response to G-protein signaling. Participates in signaling cascades triggered by odorant receptors via its function in cAMP biosynthesis: specifically activated by G alpha protein GNAL/G(olf) in olfactory epithelium. Required for the perception of odorants. Required for normal sperm motility and normal male fertility. Plays a role in regulating insulin levels and body fat accumulation in response to a high fat diet. The chain is Adenylate cyclase type 3 from Rattus norvegicus (Rat).